Reading from the N-terminus, the 448-residue chain is 3-phosphoshikimate 1-carboxyvinyltransferase (448 aa).

The 3-phosphoshikimate site is built by K28, S29, and R33. Residue K28 participates in phosphoenolpyruvate binding. G100 and R128 together coordinate phosphoenolpyruvate. 3-phosphoshikimate contacts are provided by S173, Q175, D326, and K353. Q175 is a phosphoenolpyruvate binding site. D326 serves as the catalytic Proton acceptor. Phosphoenolpyruvate-binding residues include R357 and R405.

Belongs to the EPSP synthase family. As to quaternary structure, monomer.

It is found in the cytoplasm. The enzyme catalyses 3-phosphoshikimate + phosphoenolpyruvate = 5-O-(1-carboxyvinyl)-3-phosphoshikimate + phosphate. It participates in metabolic intermediate biosynthesis; chorismate biosynthesis; chorismate from D-erythrose 4-phosphate and phosphoenolpyruvate: step 6/7. Catalyzes the transfer of the enolpyruvyl moiety of phosphoenolpyruvate (PEP) to the 5-hydroxyl of shikimate-3-phosphate (S3P) to produce enolpyruvyl shikimate-3-phosphate and inorganic phosphate. This Sinorhizobium fredii (strain NBRC 101917 / NGR234) protein is 3-phosphoshikimate 1-carboxyvinyltransferase.